Here is a 196-residue protein sequence, read N- to C-terminus: RNA-binding protein with multiple splicing 2 (196 aa).

The RRM domain maps to 20-97 (RTLFVSGLPI…QTLRLEFAKA (78 aa)). The interval 30–40 (DIKPRELYLLF) is important for homodimerization.

As to quaternary structure, homodimer. As to expression, expressed in developing heart, pronephros, retina and epiphysis. In adult, high expression in heart, moderate in kidney, undetectable in liver, lung and skeletal muscle.

It localises to the cytoplasm. The protein resides in the nucleus. The protein localises to the stress granule. RNA-binding protein involved in the regulation of smooth muscle cell differentiation and proliferation in the gastrointestinal system. Binds NOG mRNA, the major inhibitor of the bone morphogenetic protein (BMP) pathway. Mediates an increase of NOG mRNA levels, thereby contributing to the negative regulation of BMP signaling pathway and promoting reversible dedifferentiation and proliferation of smooth muscle cells. Acts as a pre-mRNA alternative splicing regulator. Mediates ACTN1 and FLNB alternative splicing. Likely binds to mRNA tandem CAC trinucleotide or CA dinucleotide motifs. This Xenopus laevis (African clawed frog) protein is RNA-binding protein with multiple splicing 2.